A 135-amino-acid polypeptide reads, in one-letter code: UPF0216 protein MTH_949 (135 aa).

It belongs to the UPF0216 family.

This is UPF0216 protein MTH_949 from Methanothermobacter thermautotrophicus (strain ATCC 29096 / DSM 1053 / JCM 10044 / NBRC 100330 / Delta H) (Methanobacterium thermoautotrophicum).